Reading from the N-terminus, the 763-residue chain is Elongation factor G, mitochondrial (763 aa).

The transit peptide at 1 to 52 directs the protein to the mitochondrion; the sequence is MFMRLKVLEMNSIRRQTLLRQFTNVYNVVSRSARLCSQAIPKRLFYSTGSRA. The region spanning 60 to 347 is the tr-type G domain; the sequence is SRLRNIGISA…AVCDYLPNPS (288 aa). GTP contacts are provided by residues 69-76, 145-149, and 199-202; these read AHIDSGKT, DTPGH, and NKMD.

This sequence belongs to the TRAFAC class translation factor GTPase superfamily. Classic translation factor GTPase family. EF-G/EF-2 subfamily.

Its subcellular location is the mitochondrion. It participates in protein biosynthesis; polypeptide chain elongation. In terms of biological role, mitochondrial GTPase that catalyzes the GTP-dependent ribosomal translocation step during translation elongation. During this step, the ribosome changes from the pre-translocational (PRE) to the post-translocational (POST) state as the newly formed A-site-bound peptidyl-tRNA and P-site-bound deacylated tRNA move to the P and E sites, respectively. Catalyzes the coordinated movement of the two tRNA molecules, the mRNA and conformational changes in the ribosome. The chain is Elongation factor G, mitochondrial (mef1) from Schizosaccharomyces japonicus (strain yFS275 / FY16936) (Fission yeast).